A 230-amino-acid chain; its full sequence is V-type proton ATPase subunit E1 (230 aa).

Residue Met1 is modified to N-acetylmethionine. A coiled-coil region spans residues 8 to 67; that stretch reads RQIQQMVRFIRQEAEEKANEISVSAEEEFNIEKLQLVEAEKKKIRQDYEKKEKQADVRKK. Position 178 is a phosphoserine (Ser178).

It belongs to the V-ATPase E subunit family. As to quaternary structure, V-ATPase is a heteromultimeric enzyme composed of a peripheral catalytic V1 complex (components A to H) attached to an integral membrane V0 proton pore complex (components: a, c, c'', d and e).

It localises to the vacuole membrane. Subunit of the peripheral V1 complex of vacuolar ATPase essential for assembly or catalytic function. V-ATPase is responsible for acidifying a variety of intracellular compartments in eukaryotic cells. Required for Golgi organization and vacuole function in embryogenesis. This Arabidopsis thaliana (Mouse-ear cress) protein is V-type proton ATPase subunit E1 (VHA-E1).